A 172-amino-acid polypeptide reads, in one-letter code: S-ribosylhomocysteine lyase (172 aa).

Positions 54, 58, and 128 each coordinate Fe cation.

It belongs to the LuxS family. In terms of assembly, homodimer. It depends on Fe cation as a cofactor.

The enzyme catalyses S-(5-deoxy-D-ribos-5-yl)-L-homocysteine = (S)-4,5-dihydroxypentane-2,3-dione + L-homocysteine. Its function is as follows. Involved in the synthesis of autoinducer 2 (AI-2) which is secreted by bacteria and is used to communicate both the cell density and the metabolic potential of the environment. The regulation of gene expression in response to changes in cell density is called quorum sensing. Catalyzes the transformation of S-ribosylhomocysteine (RHC) to homocysteine (HC) and 4,5-dihydroxy-2,3-pentadione (DPD). The protein is S-ribosylhomocysteine lyase of Vibrio atlanticus (strain LGP32) (Vibrio splendidus (strain Mel32)).